The sequence spans 159 residues: ATP synthase subunit b 2 (159 aa).

Residues 1 to 21 (MDATFWALIGLIIFLAILAYL) form a helical membrane-spanning segment.

Belongs to the ATPase B chain family. In terms of assembly, F-type ATPases have 2 components, F(1) - the catalytic core - and F(0) - the membrane proton channel. F(1) has five subunits: alpha(3), beta(3), gamma(1), delta(1), epsilon(1). F(0) has three main subunits: a(1), b(2) and c(10-14). The alpha and beta chains form an alternating ring which encloses part of the gamma chain. F(1) is attached to F(0) by a central stalk formed by the gamma and epsilon chains, while a peripheral stalk is formed by the delta and b chains.

It localises to the cell inner membrane. Its function is as follows. F(1)F(0) ATP synthase produces ATP from ADP in the presence of a proton or sodium gradient. F-type ATPases consist of two structural domains, F(1) containing the extramembraneous catalytic core and F(0) containing the membrane proton channel, linked together by a central stalk and a peripheral stalk. During catalysis, ATP synthesis in the catalytic domain of F(1) is coupled via a rotary mechanism of the central stalk subunits to proton translocation. Component of the F(0) channel, it forms part of the peripheral stalk, linking F(1) to F(0). The polypeptide is ATP synthase subunit b 2 (Brucella anthropi (strain ATCC 49188 / DSM 6882 / CCUG 24695 / JCM 21032 / LMG 3331 / NBRC 15819 / NCTC 12168 / Alc 37) (Ochrobactrum anthropi)).